A 241-amino-acid polypeptide reads, in one-letter code: DNA repair protein RecO (241 aa).

This sequence belongs to the RecO family.

Involved in DNA repair and RecF pathway recombination. The sequence is that of DNA repair protein RecO from Dinoroseobacter shibae (strain DSM 16493 / NCIMB 14021 / DFL 12).